A 336-amino-acid chain; its full sequence is Ribosomal RNA large subunit methyltransferase F (336 aa).

Belongs to the methyltransferase superfamily. METTL16/RlmF family.

It localises to the cytoplasm. It carries out the reaction adenosine(1618) in 23S rRNA + S-adenosyl-L-methionine = N(6)-methyladenosine(1618) in 23S rRNA + S-adenosyl-L-homocysteine + H(+). In terms of biological role, specifically methylates the adenine in position 1618 of 23S rRNA. This chain is Ribosomal RNA large subunit methyltransferase F, found in Yersinia pestis bv. Antiqua (strain Angola).